The chain runs to 397 residues: CCA-adding enzyme (397 aa).

Residues G26 and R29 each contribute to the ATP site. Residues G26 and R29 each contribute to the CTP site. D39 and D41 together coordinate Mg(2+). Residues R110, D153, R156, R159, and R162 each coordinate ATP. CTP-binding residues include R110, D153, R156, R159, and R162.

This sequence belongs to the tRNA nucleotidyltransferase/poly(A) polymerase family. Bacterial CCA-adding enzyme type 3 subfamily. In terms of assembly, homodimer. It depends on Mg(2+) as a cofactor.

It carries out the reaction a tRNA precursor + 2 CTP + ATP = a tRNA with a 3' CCA end + 3 diphosphate. The enzyme catalyses a tRNA with a 3' CCA end + 2 CTP + ATP = a tRNA with a 3' CCACCA end + 3 diphosphate. Functionally, catalyzes the addition and repair of the essential 3'-terminal CCA sequence in tRNAs without using a nucleic acid template. Adds these three nucleotides in the order of C, C, and A to the tRNA nucleotide-73, using CTP and ATP as substrates and producing inorganic pyrophosphate. tRNA 3'-terminal CCA addition is required both for tRNA processing and repair. Also involved in tRNA surveillance by mediating tandem CCA addition to generate a CCACCA at the 3' terminus of unstable tRNAs. While stable tRNAs receive only 3'-terminal CCA, unstable tRNAs are marked with CCACCA and rapidly degraded. This chain is CCA-adding enzyme, found in Bacillus cereus (strain ATCC 10987 / NRS 248).